Here is a 233-residue protein sequence, read N- to C-terminus: 2,3,4,5-tetrahydropyridine-2,6-dicarboxylate N-acetyltransferase (233 aa).

The protein belongs to the transferase hexapeptide repeat family. DapH subfamily.

It carries out the reaction (S)-2,3,4,5-tetrahydrodipicolinate + acetyl-CoA + H2O = L-2-acetamido-6-oxoheptanedioate + CoA. It functions in the pathway amino-acid biosynthesis; L-lysine biosynthesis via DAP pathway; LL-2,6-diaminopimelate from (S)-tetrahydrodipicolinate (acetylase route): step 1/3. Catalyzes the transfer of an acetyl group from acetyl-CoA to tetrahydrodipicolinate. This is 2,3,4,5-tetrahydropyridine-2,6-dicarboxylate N-acetyltransferase from Thermosipho africanus (strain TCF52B).